The sequence spans 508 residues: U4/U6 small nuclear ribonucleoprotein Prp31 (508 aa).

Positions 1–45 (MSLADELLADLEEAGEEDGLYPGGEEGESDGEPGERQVDGGLEDI) are disordered. Over residues 7–32 (LLADLEEAGEEDGLYPGGEEGESDGE) the composition is skewed to acidic residues. Coiled-coil stretches lie at residues 96 to 131 (EADPEYRLIVAANNLTVEIDNELNIIHKFVRDKYSK) and 192 to 226 (DDELQRLEEACDMALELNQSKHRIYEYVESRMSFI). In terms of domain architecture, Nop spans 226 to 344 (IAPNLSIIVG…IERKFDKWQE (119 aa)). Disordered regions lie at residues 345–368 (PPPVKQVKPLPAPLDGQRKKRGGR) and 442–461 (QSMTYGGKSTVRDRSSGTSS). A Nuclear localization signal (NLS) motif is present at residues 362-375 (RKKRGGRRYRKMKE).

The protein belongs to the PRP31 family. Identified in the spliceosome B complex. Component of the U4/U6-U5 tri-snRNP complex. Component of some MLL1/MLL complex.

The protein localises to the nucleus. The protein resides in the nucleus speckle. It is found in the cajal body. Involved in pre-mRNA splicing as component of the spliceosome. Required for the assembly of the U4/U5/U6 tri-snRNP complex, one of the building blocks of the spliceosome. The sequence is that of U4/U6 small nuclear ribonucleoprotein Prp31 (prpf31) from Danio rerio (Zebrafish).